The following is an 83-amino-acid chain: Retinal cone rhodopsin-sensitive cGMP 3',5'-cyclic phosphodiesterase subunit gamma (83 aa).

Positions Met1–Thr17 are enriched in polar residues. Positions Met1–Pro51 are disordered. Over residues Gly22 to Val43 the composition is skewed to basic residues.

Belongs to the rod/cone cGMP-PDE gamma subunit family. In terms of assembly, tetramer composed of two catalytic chains (alpha and beta), and two inhibitory chains (gamma).

The catalysed reaction is 3',5'-cyclic GMP + H2O = GMP + H(+). In terms of biological role, participates in processes of transmission and amplification of the visual signal. cGMP-PDEs are the effector molecules in G-protein-mediated phototransduction in vertebrate rods and cones. The polypeptide is Retinal cone rhodopsin-sensitive cGMP 3',5'-cyclic phosphodiesterase subunit gamma (PDE6H) (Bos taurus (Bovine)).